Reading from the N-terminus, the 606-residue chain is Aspartate--tRNA(Asp/Asn) ligase (606 aa).

Residue glutamate 177 participates in L-aspartate binding. The tract at residues 201–204 is aspartate; sequence QLFK. Arginine 223 contacts L-aspartate. ATP is bound by residues 223–225 and glutamine 232; that span reads RDE. Histidine 461 serves as a coordination point for L-aspartate. Glutamate 499 contacts ATP. An L-aspartate-binding site is contributed by arginine 506. ATP is bound at residue 551 to 554; it reads GMDR.

It belongs to the class-II aminoacyl-tRNA synthetase family. Type 1 subfamily. Homodimer.

Its subcellular location is the cytoplasm. The enzyme catalyses tRNA(Asx) + L-aspartate + ATP = L-aspartyl-tRNA(Asx) + AMP + diphosphate. Aspartyl-tRNA synthetase with relaxed tRNA specificity since it is able to aspartylate not only its cognate tRNA(Asp) but also tRNA(Asn). Reaction proceeds in two steps: L-aspartate is first activated by ATP to form Asp-AMP and then transferred to the acceptor end of tRNA(Asp/Asn). This is Aspartate--tRNA(Asp/Asn) ligase from Prochlorococcus marinus (strain MIT 9303).